A 359-amino-acid polypeptide reads, in one-letter code: MQILADLLNTIPAIDPAAMSRAQRHIDGLLKPVGSLGKLEALAIQLAGMPGLNGIPHVGKKAILVMCADHGVWEEGVAISPKEVTAIQAENMTRGTTGVCVLAAQAGANVHVIDVGIDTAEPIPGLINMRVARGSGNIASAPAMSRRQAEKLLLDVICYTRELAKNGVTLFGVGELGMANTTPAAAIVSTITGWDPEEVVGIGANLPTDKLANKIDVVRRAITLNQPNPQDGVDVLAKVGGFDLVGIAGVMLGAASCGLPVLLDGFLSYAAALAACQMSPAIKPYLIPSHLSAEKGARIALSHLGLEPYLNMDMRLGEGSGAALAMPIIEAACAIYNNMGELAASNIVLPGNTTSDLNS.

Catalysis depends on Glu318, which acts as the Proton acceptor.

It belongs to the CobT family. Homodimer.

It carries out the reaction 5,6-dimethylbenzimidazole + nicotinate beta-D-ribonucleotide = alpha-ribazole 5'-phosphate + nicotinate + H(+). It functions in the pathway nucleoside biosynthesis; alpha-ribazole biosynthesis; alpha-ribazole from 5,6-dimethylbenzimidazole: step 1/2. In terms of biological role, catalyzes the synthesis of alpha-ribazole-5'-phosphate from nicotinate mononucleotide (NAMN) and 5,6-dimethylbenzimidazole (DMB). In Escherichia coli O127:H6 (strain E2348/69 / EPEC), this protein is Nicotinate-nucleotide--dimethylbenzimidazole phosphoribosyltransferase.